The following is a 346-amino-acid chain: Small ribosomal subunit biogenesis GTPase RsgA (346 aa).

The tract at residues 1–26 is disordered; sequence MAKRKLTQNQTRRIQSNNAKTLHRHK. Polar residues predominate over residues 7 to 20; it reads TQNQTRRIQSNNAK. Residues 103–271 form the CP-type G domain; it reads ENEISRPDYY…LIDSPGIREF (169 aa). GTP is bound by residues 159-162 and 213-221; these read NKVD and GQSGVGKSS. Zn(2+) contacts are provided by Cys-295, Cys-300, His-302, and Cys-308.

The protein belongs to the TRAFAC class YlqF/YawG GTPase family. RsgA subfamily. As to quaternary structure, monomer. Associates with 30S ribosomal subunit, binds 16S rRNA. It depends on Zn(2+) as a cofactor.

Its subcellular location is the cytoplasm. Its function is as follows. One of several proteins that assist in the late maturation steps of the functional core of the 30S ribosomal subunit. Helps release RbfA from mature subunits. May play a role in the assembly of ribosomal proteins into the subunit. Circularly permuted GTPase that catalyzes slow GTP hydrolysis, GTPase activity is stimulated by the 30S ribosomal subunit. This is Small ribosomal subunit biogenesis GTPase RsgA from Haemophilus influenzae (strain PittEE).